The following is a 428-amino-acid chain: MGPPLGAGVSCRGGCGSSRLLAWCFLLALSPQAPGSRGAEAVWTAYLNVSWRVPHTGVNRTVWELSEEGVYGQDSPLEPVAGVLVPPDGPGALNACNPHTNFTVPTVWGSTVQVSWLALIQRGGGCTFADKIHLAYERGASGAVIFNFPGTRNEVIPMSHPGAGDIVAIMIGNLKGTKILQSIQRGIQVTMVIEVGKKHGPWVNHYSIFFVSVSFFIITAATVGYFIFYSARRLRNARAQSRKQRQLKADAKKAIGRLQLRTLKQGDREIGPDGDSCAVCIELYKPNDLVRILTCNHIFHKTCVDPWLLEHRTCPMCKCDILKALGIEVDVEDGSVSLQVPVSNEISNSASSHEEDNRSETASSGYASVQGADEPPLEEHVQSTNENLQLVNHEANSVAVDVIPHVDNPTFEEDETPHQETAVREIKS.

The first 38 residues, 1–38 (MGPPLGAGVSCRGGCGSSRLLAWCFLLALSPQAPGSRG), serve as a signal peptide directing secretion. 3 N-linked (GlcNAc...) asparagine glycosylation sites follow: Asn-48, Asn-59, and Asn-101. Residues 75–183 (SPLEPVAGVL…LKGTKILQSI (109 aa)) enclose the PA domain. A helical transmembrane segment spans residues 208 to 228 (IFFVSVSFFIITAATVGYFIF). Residues 277–318 (CAVCIELYKPNDLVRILTCNHIFHKTCVDPWLLEHRTCPMCK) form an RING-type; atypical zinc finger. Residues 346–428 (ISNSASSHEE…QETAVREIKS (83 aa)) are disordered. Basic and acidic residues predominate over residues 416 to 428 (TPHQETAVREIKS).

Post-translationally, auto-ubiquitinated. Controls the development of T-cell clonal anergy by ubiquitination.

It localises to the cytoplasm. The protein resides in the endomembrane system. It is found in the cytoskeleton. Its subcellular location is the perinuclear region. It carries out the reaction S-ubiquitinyl-[E2 ubiquitin-conjugating enzyme]-L-cysteine + [acceptor protein]-L-lysine = [E2 ubiquitin-conjugating enzyme]-L-cysteine + N(6)-ubiquitinyl-[acceptor protein]-L-lysine.. It functions in the pathway protein modification; protein ubiquitination. E3 ubiquitin-protein ligase that catalyzes 'Lys-27', 'Lys-48'- or 'Lys-63'-linked polyubiquitin chains formation and plays a role in different biological processes such as modulation of immune response, cytoskeletal dynamics or protein homeostasis. Inhibits IL2 and IL4 transcription, thereby playing an important role in the induction of the anergic phenotype, a long-term stable state of T-lymphocyte unresponsiveness to antigenic stimulation associated with the blockade of interleukin production. Ubiquitinates ARPC5 with 'Lys-48' linkages and COR1A with 'Lys-63' linkages leading to their degradation, down-regulation of these cytoskeletal components results in impaired lamellipodium formation and reduced accumulation of F-actin at the immunological synapse. Functions in the patterning of the dorsal ectoderm; sensitizes ectoderm to respond to neural-inducing signals. Plays a positive role in innate immune response by promoting 'Lys-63'-linked ubiquitination of TBK1 after RNA- or DNA-virus infection. Regulates alveolar macrophage activation and neutrophil infiltration by interacting with TLR4, targeting it for degradation, and inhibiting NF-kappa-B activation, hence decreasing pro-inflammatory cytokines. Negatively regulates the IL-3/STAT5 signaling pathway by facilitating 'Lys-27'-linked polyubiquitination of IL3RA leading to its degradation via lysosomal pathway. Directly regulates the N-glycosylation process in the endoplasmic reticulum by targeting the glycosyl-transferase RPN1 for ubiquitination and degradation. Other substrates targeted for degradation by RNF128 include transmembrane proteins CD40L, CD83 or the tetraspanin CD151. This chain is E3 ubiquitin-protein ligase RNF128 (RNF128), found in Pongo abelii (Sumatran orangutan).